The following is a 379-amino-acid chain: Putative beta-glucosidase 6 (379 aa).

The signal sequence occupies residues 1–20 (MEKTFALITIFLAFAFSGKC). A beta-D-glucoside is bound by residues Q43, H141, and 186 to 187 (NE). E187 (proton donor) is an active-site residue. C206 and C213 form a disulfide bridge. N-linked (GlcNAc...) asparagine glycosylation occurs at N217. Y329 is a binding site for a beta-D-glucoside. N-linked (GlcNAc...) asparagine glycosylation occurs at N362.

It belongs to the glycosyl hydrolase 1 family.

The enzyme catalyses Hydrolysis of terminal, non-reducing beta-D-glucosyl residues with release of beta-D-glucose.. This is Putative beta-glucosidase 6 from Arabidopsis thaliana (Mouse-ear cress).